We begin with the raw amino-acid sequence, 198 residues long: KHSLPDLPYDYGALEPHINAQIMQLHHSKHHAAYVNNLNDTEEKYKEALAKGDVTAQIALQPALKFNGGGHINHSIFWTNLSPNGGGEPKGELLEAIKRDFGSFDKFKERLTAASVGVQGSGWGWLGFNKERGHLQIAACPNQDPLQGTTGLIPLLGIDVWEHAYYLQYKNVRPDYLKAIWNVINWENVTERYMACKK.

Mn(2+) is bound at residue histidine 26. Tyrosine 34 is modified (3'-nitrotyrosine). N6-acetyllysine; alternate is present on residues lysine 44 and lysine 51. N6-succinyllysine; alternate is present on residues lysine 44 and lysine 51. Residue histidine 74 participates in Mn(2+) binding. Lysine 90 bears the N6-acetyllysine mark. Lysine 98 and lysine 106 each carry N6-acetyllysine; alternate. N6-succinyllysine; alternate is present on residues lysine 98 and lysine 106. Mn(2+) contacts are provided by aspartate 159 and histidine 163. N6-acetyllysine is present on lysine 178.

It belongs to the iron/manganese superoxide dismutase family. As to quaternary structure, homotetramer. It depends on Mn(2+) as a cofactor. In terms of processing, nitrated under oxidative stress. Nitration coupled with oxidation inhibits the catalytic activity. Post-translationally, acetylation at Lys-98 decreases enzymatic activity. Deacetylated by SIRT3 upon exposure to ionizing radiations or after long fasting. Polyubiquitinated; leading to proteasomal degradation. Deubiquitinated by USP36 which increases protein stability.

The protein resides in the mitochondrion matrix. It catalyses the reaction 2 superoxide + 2 H(+) = H2O2 + O2. Functionally, destroys superoxide anion radicals which are normally produced within the cells and which are toxic to biological systems. The sequence is that of Superoxide dismutase [Mn], mitochondrial (SOD2) from Callithrix jacchus (White-tufted-ear marmoset).